The chain runs to 107 residues: 2Fe-2S ferredoxin CtmE (107 aa).

Residues 3-106 enclose the 2Fe-2S ferredoxin-type domain; the sequence is VKVTYVDSAN…GLVIHTLEPE (104 aa). Positions 41, 47, 50, and 87 each coordinate [2Fe-2S] cluster.

Belongs to the adrenodoxin/putidaredoxin family. The cofactor is [2Fe-2S] cluster.

It functions in the pathway terpene metabolism; monoterpene degradation. In terms of biological role, involved in the degradation of the cyclic monoterpene limonene. Probably part of an electron transfer system involved in the oxidation of limonene to perillyl alcohol. The sequence is that of 2Fe-2S ferredoxin CtmE from Castellaniella defragrans (strain DSM 12143 / CCUG 39792 / 65Phen) (Alcaligenes defragrans).